The sequence spans 185 residues: ATP synthase subunit delta (185 aa).

Belongs to the ATPase delta chain family. In terms of assembly, F-type ATPases have 2 components, F(1) - the catalytic core - and F(0) - the membrane proton channel. F(1) has five subunits: alpha(3), beta(3), gamma(1), delta(1), epsilon(1). CF(0) has four main subunits: a(1), b(1), b'(1) and c(10-14). The alpha and beta chains form an alternating ring which encloses part of the gamma chain. F(1) is attached to F(0) by a central stalk formed by the gamma and epsilon chains, while a peripheral stalk is formed by the delta, b and b' chains.

Its subcellular location is the cellular thylakoid membrane. Its function is as follows. F(1)F(0) ATP synthase produces ATP from ADP in the presence of a proton or sodium gradient. F-type ATPases consist of two structural domains, F(1) containing the extramembraneous catalytic core and F(0) containing the membrane proton channel, linked together by a central stalk and a peripheral stalk. During catalysis, ATP synthesis in the catalytic domain of F(1) is coupled via a rotary mechanism of the central stalk subunits to proton translocation. In terms of biological role, this protein is part of the stalk that links CF(0) to CF(1). It either transmits conformational changes from CF(0) to CF(1) or is implicated in proton conduction. The chain is ATP synthase subunit delta from Acaryochloris marina (strain MBIC 11017).